The chain runs to 644 residues: Ribonuclease R (644 aa).

The region spanning 211–529 (RINYSHIPFI…LHRLLKELLF (319 aa)) is the RNB domain. The S1 motif domain maps to 573–644 (LEFLEKEFLG…ITERIKEHVS (72 aa)).

This sequence belongs to the RNR ribonuclease family. RNase R subfamily.

The protein localises to the cytoplasm. It carries out the reaction Exonucleolytic cleavage in the 3'- to 5'-direction to yield nucleoside 5'-phosphates.. Functionally, 3'-5' exoribonuclease that releases 5'-nucleoside monophosphates and is involved in maturation of structured RNAs. This chain is Ribonuclease R, found in Helicobacter pylori (strain J99 / ATCC 700824) (Campylobacter pylori J99).